An 86-amino-acid chain; its full sequence is YcgL domain-containing protein XOO0428 (86 aa).

The YcgL domain occupies 1–83 (MHAYVYKSQR…PKTRVLAGEC (83 aa)).

This chain is YcgL domain-containing protein XOO0428, found in Xanthomonas oryzae pv. oryzae (strain MAFF 311018).